The chain runs to 380 residues: Erythronate-4-phosphate dehydrogenase (380 aa).

Positions 45 and 66 each coordinate substrate. Residues aspartate 146, threonine 174, 205–207 (ASR), and aspartate 231 each bind NAD(+). Residue arginine 207 is part of the active site. Glutamate 236 is a catalytic residue. Histidine 253 (proton donor) is an active-site residue. Glycine 256 lines the NAD(+) pocket. Tyrosine 257 serves as a coordination point for substrate.

The protein belongs to the D-isomer specific 2-hydroxyacid dehydrogenase family. PdxB subfamily. As to quaternary structure, homodimer.

It is found in the cytoplasm. The enzyme catalyses 4-phospho-D-erythronate + NAD(+) = (R)-3-hydroxy-2-oxo-4-phosphooxybutanoate + NADH + H(+). The protein operates within cofactor biosynthesis; pyridoxine 5'-phosphate biosynthesis; pyridoxine 5'-phosphate from D-erythrose 4-phosphate: step 2/5. In terms of biological role, catalyzes the oxidation of erythronate-4-phosphate to 3-hydroxy-2-oxo-4-phosphonooxybutanoate. The sequence is that of Erythronate-4-phosphate dehydrogenase from Pseudomonas putida (strain W619).